The sequence spans 420 residues: Serine protease inhibitor A3B (420 aa).

Positions 1-17 (MAFIAALGLLMAEICPA) are cleaved as a signal peptide. N-linked (GlcNAc...) asparagine glycosylation is found at Asn104 and Asn349. An RCL region spans residues 367-392 (GTEGDAITIVGYNFMSAKLKPVFVKF).

Belongs to the serpin family.

It localises to the secreted. The protein is Serine protease inhibitor A3B (Serpina3b) of Mus musculus (Mouse).